The sequence spans 523 residues: GMP synthase [glutamine-hydrolyzing] (523 aa).

The region spanning 8–205 (KILILDFGSQ…VVNICGCETK (198 aa)) is the Glutamine amidotransferase type-1 domain. C85 serves as the catalytic Nucleophile. Catalysis depends on residues H179 and E181. The GMPS ATP-PPase domain maps to 206–398 (WTAENIIEDA…LGLPAEMINR (193 aa)). 233–239 (SGGVDSS) is a binding site for ATP.

As to quaternary structure, homodimer.

It catalyses the reaction XMP + L-glutamine + ATP + H2O = GMP + L-glutamate + AMP + diphosphate + 2 H(+). Its pathway is purine metabolism; GMP biosynthesis; GMP from XMP (L-Gln route): step 1/1. Catalyzes the synthesis of GMP from XMP. This is GMP synthase [glutamine-hydrolyzing] (guaA) from Haemophilus influenzae (strain ATCC 51907 / DSM 11121 / KW20 / Rd).